The chain runs to 3567 residues: Erythronolide synthase EryA2 (3567 aa).

In terms of domain architecture, Ketosynthase family 3 (KS3) 1 spans 30–455 (SDPIAIVSMA…GTNAHVIVEE (426 aa)). Module stretches follow at residues 33-1467 (IAIV…QHLR) and 1491-3485 (IAIV…EHLR). C202 serves as the catalytic Acyl-thioester intermediate; for beta-ketoacyl synthase 1 activity. Active-site for beta-ketoacyl synthase 1 activity residues include H337 and H377. An acyltransferase 1 region spans residues 560 to 880 (VFLFPGQGSQ…MATAHVSGVD (321 aa)). S651 functions as the Acyl-ester intermediate; for acyltransferase 1 activity in the catalytic mechanism. The segment at 1132–1297 (GTVLVTGAAS…CTSVAWTPWA (166 aa)) is C2-type beta-ketoacyl reductase 1. Catalysis depends on Y1267, which acts as the For C2-type beta-ketoacyl reductase 1 and probable racemase activity. The tract at residues 1364 to 1385 (GRGGQAEAEPDSGPTGEPAQRL) is disordered. Positions 1395 to 1470 (ENLLELVANA…ALAQHLRARL (76 aa)) constitute a Carrier 1 domain. Position 1430 is an O-(pantetheine 4'-phosphoryl)serine (S1430). The Ketosynthase family 3 (KS3) 2 domain maps to 1488–1912 (SEPIAIVGIG…GTNAHVIVEE (425 aa)). C1661 functions as the Acyl-thioester intermediate; for beta-ketoacyl synthase 2 activity in the catalytic mechanism. Active-site for beta-ketoacyl synthase 2 activity residues include H1796 and H1834. The acyltransferase 2 stretch occupies residues 2015 to 2331 (LVFPGQGAQW…NLLRAHVHGV (317 aa)). The active-site Acyl-ester intermediate; for acyltransferase 2 activity is S2105. The interval 2377–2502 (HPLLLAAVDV…GTLAQGVAAG (126 aa)) is N-terminal hotdog fold. Residues 2377 to 2645 (HPLLLAAVDV…SLVVRSTGEK (269 aa)) form a dehydratase region. One can recognise a PKS/mFAS DH domain in the interval 2377–2648 (HPLLLAAVDV…VRSTGEKWEQ (272 aa)). Residue H2409 is the Proton acceptor; for dehydratase activity of the active site. Positions 2514–2648 (AVRIPLDDHY…VRSTGEKWEQ (135 aa)) are C-terminal hotdog fold. The active-site Proton donor; for dehydratase activity is the D2571. Residues 2831 to 3131 (GAIDSVAFEP…RGRHVGKLVL (301 aa)) form an enoyl reductase region. The For enoyl reductase activity role is filled by Y2874. NADP(+) contacts are provided by residues 2964 to 2973 (HAAAGGVGMA), 3149 to 3152 (TGTL), 3173 to 3176 (SRRG), 3202 to 3203 (DT), K3250, and 3272 to 3273 (FS). The beta-ketoacyl reductase 2 stretch occupies residues 3141-3317 (GTVLITGGTG…AKALGWGLWA (177 aa)). Y3287 serves as the catalytic For beta-ketoacyl reductase 2 activity. The Carrier 2 domain occupies 3413 to 3488 (AGLAELVRSH…AVAEHLRDRL (76 aa)). The residue at position 3448 (S3448) is an O-(pantetheine 4'-phosphoryl)serine.

In terms of assembly, homodimer. Erythronolide synthase is composed of EryAI, EryAII and EryAIII multimodular (2 modules) polypeptides each coding for a functional synthase subunit which participates in 2 of the six FAS-like elongation steps required for formation of the polyketide. Module 1, 2, 3, 4, 5, and 6 participating in biosynthesis steps 1, 2, 3, 4, 5, and 6, respectively. Pantetheine 4'-phosphate serves as cofactor.

The catalysed reaction is 6 (S)-methylmalonyl-CoA + propanoyl-CoA + 6 NADPH + 12 H(+) = 6-deoxyerythronolide B + 6 CO2 + 6 NADP(+) + 7 CoA + H2O. It participates in antibiotic biosynthesis; erythromycin biosynthesis. Functionally, involved in the biosynthesis of antibiotic erythromycin via the biosynthesis of its aglycone precursor, 6-deoxyerythronolide B (6-dEB). The polypeptide is Erythronolide synthase EryA2 (Saccharopolyspora erythraea (Streptomyces erythraeus)).